Reading from the N-terminus, the 194-residue chain is MTEYVLILISAVLVNNFVLVQFLGLCPFMGVSNKVETAMGMSLATTFVLTLSSVLAYLTWAYILVPFELEYLRTISFILVIAVAVQFTEMFVKKASPLLYRVLGVFLPLITSNCAVLGVALLNVRQEDATFMSSLTYGFGAAIGFSLVLILFAAMRERIAVADVPEAFRGPSIGLITAGLMSLAFMGFSGLIKL.

6 helical membrane passes run valine 5 to leucine 25, phenylalanine 47 to phenylalanine 67, leucine 72 to valine 92, valine 102 to leucine 122, leucine 135 to methionine 155, and serine 172 to isoleucine 192.

This sequence belongs to the NqrDE/RnfAE family. As to quaternary structure, the complex is composed of six subunits: RnfA, RnfB, RnfC, RnfD, RnfE and RnfG.

The protein localises to the cell inner membrane. Functionally, part of a membrane-bound complex that couples electron transfer with translocation of ions across the membrane. This chain is Ion-translocating oxidoreductase complex subunit A, found in Alcanivorax borkumensis (strain ATCC 700651 / DSM 11573 / NCIMB 13689 / SK2).